The sequence spans 387 residues: 3-ketoacyl-CoA thiolase (387 aa).

Catalysis depends on cysteine 91, which acts as the Acyl-thioester intermediate. Residues histidine 343 and cysteine 373 each act as proton acceptor in the active site.

It belongs to the thiolase-like superfamily. Thiolase family. As to quaternary structure, heterotetramer of two alpha chains (FadB) and two beta chains (FadA).

The protein resides in the cytoplasm. It carries out the reaction an acyl-CoA + acetyl-CoA = a 3-oxoacyl-CoA + CoA. It functions in the pathway lipid metabolism; fatty acid beta-oxidation. In terms of biological role, catalyzes the final step of fatty acid oxidation in which acetyl-CoA is released and the CoA ester of a fatty acid two carbons shorter is formed. The chain is 3-ketoacyl-CoA thiolase from Escherichia coli O139:H28 (strain E24377A / ETEC).